Reading from the N-terminus, the 93-residue chain is CRISPR-associated endoribonuclease Cas2 3 (93 aa).

Residue Asp10 participates in Mg(2+) binding.

Belongs to the CRISPR-associated endoribonuclease Cas2 protein family. In terms of assembly, homodimer, forms a heterotetramer with a Cas1 homodimer. Requires Mg(2+) as cofactor.

Its function is as follows. CRISPR (clustered regularly interspaced short palindromic repeat), is an adaptive immune system that provides protection against mobile genetic elements (viruses, transposable elements and conjugative plasmids). CRISPR clusters contain sequences complementary to antecedent mobile elements and target invading nucleic acids. CRISPR clusters are transcribed and processed into CRISPR RNA (crRNA). Functions as a ssRNA-specific endoribonuclease. Involved in the integration of spacer DNA into the CRISPR cassette. In Chloroflexus aurantiacus (strain ATCC 29366 / DSM 635 / J-10-fl), this protein is CRISPR-associated endoribonuclease Cas2 3.